Here is a 236-residue protein sequence, read N- to C-terminus: Purine nucleoside phosphorylase DeoD-type (236 aa).

H4 provides a ligand contact to a purine D-ribonucleoside. Residues G20, R24, R43, and 87–90 each bind phosphate; that span reads RVGT. A purine D-ribonucleoside-binding positions include 179-181 and 203-204; these read EME and SD. The active-site Proton donor is the D204.

This sequence belongs to the PNP/UDP phosphorylase family. In terms of assembly, homohexamer; trimer of homodimers.

It carries out the reaction a purine D-ribonucleoside + phosphate = a purine nucleobase + alpha-D-ribose 1-phosphate. The enzyme catalyses a purine 2'-deoxy-D-ribonucleoside + phosphate = a purine nucleobase + 2-deoxy-alpha-D-ribose 1-phosphate. Its function is as follows. Catalyzes the reversible phosphorolytic breakdown of the N-glycosidic bond in the beta-(deoxy)ribonucleoside molecules, with the formation of the corresponding free purine bases and pentose-1-phosphate. This Streptococcus thermophilus (strain ATCC BAA-491 / LMD-9) protein is Purine nucleoside phosphorylase DeoD-type.